Here is a 290-residue protein sequence, read N- to C-terminus: Arylamine N-acetyltransferase 2 (290 aa).

Cys-68 functions as the Acyl-thioester intermediate in the catalytic mechanism. Ser-103 and Gly-104 together coordinate CoA. Ile-106 to His-107 contributes to the substrate binding site. Catalysis depends on residues His-107 and Asp-122. Residue Tyr-208 coordinates CoA.

This sequence belongs to the arylamine N-acetyltransferase family.

It is found in the cytoplasm. The catalysed reaction is an arylamine + acetyl-CoA = an N-acetylarylamine + CoA. The enzyme catalyses an N-hydroxyarylamine + acetyl-CoA = an N-acetoxyarylamine + CoA. In terms of biological role, catalyzes the N- or O-acetylation of various arylamine and heterocyclic amine substrates. Participates in the detoxification of a plethora of hydrazine and arylamine drugs. This chain is Arylamine N-acetyltransferase 2 (Nat2), found in Rattus norvegicus (Rat).